The chain runs to 251 residues: Probable transcriptional regulatory protein Caul_0780 (251 aa).

This sequence belongs to the TACO1 family.

The protein resides in the cytoplasm. This Caulobacter sp. (strain K31) protein is Probable transcriptional regulatory protein Caul_0780.